A 202-amino-acid chain; its full sequence is MALLWALAVLSHLPLLDAQSPECANLMTVAPITNATMDLLSGKWFYIGSAFRNPEYNKSARAIQAAFFYLEPRHAEDKLITREYQTIEDKCVYNCSFIKIYRQNGTLSKVESDREHFVDLLLSKHFRTFMLAASWNGTKNVGVSFYADKPEVTQEQKKEFLDVIKCIGIQESEIIYTDEKKDACGPLEKQHEEERKKETEAS.

An N-terminal signal peptide occupies residues 1–18 (MALLWALAVLSHLPLLDA). N-linked (GlcNAc...) asparagine glycans are attached at residues Asn34, Asn57, Asn94, Asn104, and Asn136. Cys91 and Cys184 form a disulfide bridge.

This sequence belongs to the calycin superfamily. Lipocalin family.

Its subcellular location is the secreted. In terms of biological role, functions as a transport protein in the blood stream. Binds various ligands in the interior of its beta-barrel domain. Appears to function in modulating the activity of the immune system during the acute-phase reaction. In Bos taurus (Bovine), this protein is Alpha-1-acid glycoprotein (ORM1).